Reading from the N-terminus, the 72-residue chain is SRY-related protein MG43 (72 aa).

Positions 1-69 (VKRPMNAFMV…KHMADYPDYK (69 aa)) form a DNA-binding region, HMG box.

Its subcellular location is the nucleus. The protein is SRY-related protein MG43 of Tarentola mauritanica (Common wall gecko).